Consider the following 309-residue polypeptide: UDP-N-acetylenolpyruvoylglucosamine reductase (309 aa).

The 164-residue stretch at 24 to 187 (RVGGPADWLF…TKAVFEAPRG (164 aa)) folds into the FAD-binding PCMH-type domain. The active site involves Arg-167. Basic and acidic residues predominate over residues 200-213 (LARRDATQPTKERS). Residues 200–230 (LARRDATQPTKERSAGSTFRNPAGFSSTGRS) are disordered. Positions 214–228 (AGSTFRNPAGFSSTG) are enriched in polar residues. Residue Ser-216 is the Proton donor of the active site. Glu-298 is a catalytic residue.

The protein belongs to the MurB family. FAD is required as a cofactor.

The protein resides in the cytoplasm. It catalyses the reaction UDP-N-acetyl-alpha-D-muramate + NADP(+) = UDP-N-acetyl-3-O-(1-carboxyvinyl)-alpha-D-glucosamine + NADPH + H(+). It participates in cell wall biogenesis; peptidoglycan biosynthesis. Functionally, cell wall formation. This chain is UDP-N-acetylenolpyruvoylglucosamine reductase, found in Roseobacter denitrificans (strain ATCC 33942 / OCh 114) (Erythrobacter sp. (strain OCh 114)).